Reading from the N-terminus, the 315-residue chain is MEARAQSGNGSQPLLQTPRDGGRQRGEPDPRDALTQQVHVLSLDQIRAIRNTNEYTEGPTVVPRPGLKPAPRPSTQHKHERLHGLPEHRQPPRLQHSQVHSSARAPLSRSISTVSSGSRSSTRTSTSSSSSEQRLLGSSFSSGPVADGIIRVQPKSELKPGELKPLSKEDLGLHAYRCEDCGKCKCKECTYPRPLPSDWICDKQCLCSAQNVIDYGTCVCCVKGLFYHCSNDDGDNCADNPCSCSQSHCCTRWSAMGVMSLFLPCLWCYLPAKGCLKLCQGCYDRVNRPGCRCKNSNTVCCKVPTVPPRNFEKPT.

Over residues 1 to 15 (MEARAQSGNGSQPLL) the composition is skewed to polar residues. Disordered regions lie at residues 1 to 39 (MEARAQSGNGSQPLLQTPRDGGRQRGEPDPRDALTQQVH) and 51 to 140 (NTNE…GSSF). A compositionally biased stretch (basic and acidic residues) spans 20–32 (DGGRQRGEPDPRD). The span at 108–140 (SRSISTVSSGSRSSTRTSTSSSSSEQRLLGSSF) shows a compositional bias: low complexity. A required for interaction with CAV1 region spans residues 118–315 (SRSSTRTSTS…VPPRNFEKPT (198 aa)). The 115-residue stretch at 177–291 (RCEDCGKCKC…CYDRVNRPGC (115 aa)) folds into the SPR domain. A required for interaction with TESK1 region spans residues 178-315 (CEDCGKCKCK…VPPRNFEKPT (138 aa)).

This sequence belongs to the sprouty family. In terms of assembly, forms heterodimers with SPRY1. Forms a tripartite complex containing GAB1, METTL13 and SPRY2. Within the complex interacts with METTL13. Interacts with RAF1. Interacts (via C-terminus) with TESK1 (via C-terminus); the interaction disrupts SPRY2 interaction with GRB2, potentially via disruption of SPRY2 serine dephosphorylation. Interacts with PPP2R1A/PP2A-A and PPP2CA/PP2A-C; the interaction with PPP2CA/PP2A-C is inhibited by interaction with TESK1, possibly by vesicular sequestration of SPRY2. Inhibition of the interaction with the serine/threonine-protein phosphatase 2A (PP2A) holoenzyme results in loss of PP2A-mediated dephosphorylation, resulting in the loss of SPRY2 interaction with GRB2. Interacts with GRB2. Interacts with CBL/C-CBL; the interaction inhibits CBL-mediated ubiquitination of EGFR. Interacts (via C-terminus) with CAV1 (via C-terminus). Cleaved at Pro-144 by the prolyl endopeptidase FAP (seprase) activity (in vitro).

The protein resides in the cytoplasm. It is found in the cytoskeleton. It localises to the cell projection. The protein localises to the ruffle membrane. Functionally, antagonist of fibroblast growth factor (FGF) pathways via inhibition of FGF-mediated phosphorylation of ERK1/2. Thereby acts as an antagonist of FGF-induced retinal lens fiber differentiation, may inhibit limb bud outgrowth and may negatively modulate respiratory organogenesis. Inhibits TGFB-induced epithelial-to-mesenchymal transition in retinal lens epithelial cells. Inhibits CBL/C-CBL-mediated EGFR ubiquitination. This is Protein sprouty homolog 2 (SPRY2) from Macaca fascicularis (Crab-eating macaque).